The primary structure comprises 153 residues: Membrane protein FAM174B (153 aa).

Residues Met-1–Ala-27 form the signal peptide. The Extracellular segment spans residues Arg-28 to Thr-84. Residues Glu-31 to Ser-67 are disordered. N-linked (GlcNAc...) asparagine glycosylation occurs at Asn-50. The chain crosses the membrane as a helical span at residues Leu-85–Leu-105. Residues Arg-106–Arg-153 are Cytoplasmic-facing.

It belongs to the FAM174 family.

Its subcellular location is the cell membrane. It is found in the golgi apparatus. Its function is as follows. Essential for Golgi structural integrity. This chain is Membrane protein FAM174B (Fam174b), found in Mus musculus (Mouse).